The chain runs to 403 residues: Leu/Ile/Val-binding protein homolog 8 (403 aa).

The first 26 residues, 1–26, serve as a signal peptide directing secretion; sequence MRLSRLLIGASLGVALSSTVFTAALA.

It belongs to the leucine-binding protein family.

Component of an amino-acid transport system. This is Leu/Ile/Val-binding protein homolog 8 from Brucella melitensis biotype 1 (strain ATCC 23456 / CCUG 17765 / NCTC 10094 / 16M).